Here is a 391-residue protein sequence, read N- to C-terminus: Phosphoglycerate kinase (391 aa).

Substrate is bound by residues 21–23 (DLN), arginine 36, 59–62 (HLGR), arginine 113, and arginine 146. Residues lysine 197, glutamate 319, and 345-348 (GGDT) contribute to the ATP site.

It belongs to the phosphoglycerate kinase family. In terms of assembly, monomer.

The protein resides in the cytoplasm. The catalysed reaction is (2R)-3-phosphoglycerate + ATP = (2R)-3-phospho-glyceroyl phosphate + ADP. Its pathway is carbohydrate degradation; glycolysis; pyruvate from D-glyceraldehyde 3-phosphate: step 2/5. This Shewanella baltica (strain OS223) protein is Phosphoglycerate kinase.